A 298-amino-acid chain; its full sequence is N-acetylmuramic acid 6-phosphate etherase (298 aa).

One can recognise an SIS domain in the interval 55–218; the sequence is IHAQVSGGGR…STGLMIKSGK (164 aa). The active-site Proton donor is Glu-83. The active site involves Glu-114.

The protein belongs to the GCKR-like family. MurNAc-6-P etherase subfamily. Homodimer.

The enzyme catalyses N-acetyl-D-muramate 6-phosphate + H2O = N-acetyl-D-glucosamine 6-phosphate + (R)-lactate. It functions in the pathway amino-sugar metabolism; 1,6-anhydro-N-acetylmuramate degradation. It participates in amino-sugar metabolism; N-acetylmuramate degradation. The protein operates within cell wall biogenesis; peptidoglycan recycling. Specifically catalyzes the cleavage of the D-lactyl ether substituent of MurNAc 6-phosphate, producing GlcNAc 6-phosphate and D-lactate. Together with AnmK, is also required for the utilization of anhydro-N-acetylmuramic acid (anhMurNAc) either imported from the medium or derived from its own cell wall murein, and thus plays a role in cell wall recycling. This chain is N-acetylmuramic acid 6-phosphate etherase, found in Escherichia coli O8 (strain IAI1).